The following is a 168-amino-acid chain: Skp-like protein (168 aa).

The signal sequence occupies residues 1–22 (MRKFTQFVLITAAIMAAPSAFA).

It belongs to the Skp family.

The chain is Skp-like protein from Pseudomonas aeruginosa (strain ATCC 15692 / DSM 22644 / CIP 104116 / JCM 14847 / LMG 12228 / 1C / PRS 101 / PAO1).